The following is a 334-amino-acid chain: Desumoylating isopeptidase 1 homolog (334 aa).

The region spanning 30–174 (TVVRLNVYDM…FLEKCIPQEW (145 aa)) is the PPPDE domain. Catalysis depends on residues H55 and C133. Residues 310 to 325 (SNIGKTNSTPGTTSNG) are compositionally biased toward polar residues. The tract at residues 310–334 (SNIGKTNSTPGTTSNGLAKPTCSEC) is disordered.

It belongs to the DeSI family. In terms of tissue distribution, expressed in the pharynx, hypodermis, intestine, head neuron and tail neuron.

The protein localises to the cytoplasm. Its subcellular location is the nucleus. Protease which deconjugates SUMO from some substrate proteins. Has isopeptidase but not SUMO-processing activity. Collaborates with ubql-1 in the export of ubiquitinated proteins from the nucleus to the cytoplasm. This Caenorhabditis elegans protein is Desumoylating isopeptidase 1 homolog.